We begin with the raw amino-acid sequence, 759 residues long: Polyribonucleotide nucleotidyltransferase (759 aa).

Residues D522 and D528 each contribute to the Mg(2+) site. Residues 588–647 (PRITTIKVPVDKIGEVIGPKGKMINSITEETGASISIEDDGTVFVGASNGEAAQAAIDKI) form the KH domain. The S1 motif domain maps to 659 to 728 (GERFLGTVVK…NRGKISLVLV (70 aa)). Residues 734-759 (AEASDNGSATPSDKAPATADATTAGN) are disordered. The span at 741-759 (SATPSDKAPATADATTAGN) shows a compositional bias: low complexity.

It belongs to the polyribonucleotide nucleotidyltransferase family. Mg(2+) is required as a cofactor.

It is found in the cytoplasm. The enzyme catalyses RNA(n+1) + phosphate = RNA(n) + a ribonucleoside 5'-diphosphate. Involved in mRNA degradation. Catalyzes the phosphorolysis of single-stranded polyribonucleotides processively in the 3'- to 5'-direction. In Mycobacterium sp. (strain JLS), this protein is Polyribonucleotide nucleotidyltransferase.